A 419-amino-acid polypeptide reads, in one-letter code: Histidine--tRNA ligase (419 aa).

The protein belongs to the class-II aminoacyl-tRNA synthetase family. As to quaternary structure, homodimer.

It is found in the cytoplasm. It catalyses the reaction tRNA(His) + L-histidine + ATP = L-histidyl-tRNA(His) + AMP + diphosphate + H(+). The sequence is that of Histidine--tRNA ligase from Thermosipho melanesiensis (strain DSM 12029 / CIP 104789 / BI429).